The sequence spans 185 residues: CASP-like protein 2D1 (185 aa).

The Cytoplasmic portion of the chain corresponds to 1 to 15 (MRTHIDDSASGKNHH). The chain crosses the membrane as a helical span at residues 16–36 (LPMLWFFDSSLRLCAIPLSVA). The Extracellular portion of the chain corresponds to 37–64 (TMWITVTNKEDNSSYGMLKYNNLSALKY). Residues asparagine 48 and asparagine 58 are each glycosylated (N-linked (GlcNAc...) asparagine). Residues 65 to 85 (MVLVSALCACYALLAAACSLV) traverse the membrane as a helical segment. Residues 86-92 (RCFVSKA) lie on the Cytoplasmic side of the membrane. Residues 93 to 113 (WIFFVSDQIVAYLAITSVAAV) form a helical membrane-spanning segment. At 114–145 (MEMYYLAYNGAKEDSWSEACSSYGSFCSKVKL) the chain is on the extracellular side. A helical membrane pass occupies residues 146 to 166 (ALILHTITFCCFFVIAVISAF). The Cytoplasmic portion of the chain corresponds to 167 to 185 (RAFSVFDPPFVNSQEVQGD).

The protein belongs to the Casparian strip membrane proteins (CASP) family. Homodimer and heterodimers.

Its subcellular location is the cell membrane. The protein is CASP-like protein 2D1 of Glycine max (Soybean).